The following is a 275-amino-acid chain: Dermonecrotic toxin LamSicTox-alphaIV1ii (275 aa).

His5 is an active-site residue. Mg(2+) contacts are provided by Glu25 and Asp27. The Nucleophile role is filled by His41. 2 cysteine pairs are disulfide-bonded: Cys45–Cys51 and Cys47–Cys192. Residue Asp85 participates in Mg(2+) binding.

Belongs to the arthropod phospholipase D family. Class II subfamily. Mg(2+) serves as cofactor. Expressed by the venom gland.

It is found in the secreted. The catalysed reaction is an N-(acyl)-sphingosylphosphocholine = an N-(acyl)-sphingosyl-1,3-cyclic phosphate + choline. It catalyses the reaction an N-(acyl)-sphingosylphosphoethanolamine = an N-(acyl)-sphingosyl-1,3-cyclic phosphate + ethanolamine. The enzyme catalyses a 1-acyl-sn-glycero-3-phosphocholine = a 1-acyl-sn-glycero-2,3-cyclic phosphate + choline. It carries out the reaction a 1-acyl-sn-glycero-3-phosphoethanolamine = a 1-acyl-sn-glycero-2,3-cyclic phosphate + ethanolamine. In terms of biological role, dermonecrotic toxins cleave the phosphodiester linkage between the phosphate and headgroup of certain phospholipids (sphingolipid and lysolipid substrates), forming an alcohol (often choline) and a cyclic phosphate. This toxin acts on sphingomyelin (SM). It may also act on ceramide phosphoethanolamine (CPE), lysophosphatidylcholine (LPC) and lysophosphatidylethanolamine (LPE), but not on lysophosphatidylserine (LPS), and lysophosphatidylglycerol (LPG). It acts by transphosphatidylation, releasing exclusively cyclic phosphate products as second products. Induces dermonecrosis, hemolysis, increased vascular permeability, edema, inflammatory response, and platelet aggregation. This chain is Dermonecrotic toxin LamSicTox-alphaIV1ii, found in Loxosceles amazonica (Recluse spider).